The following is a 304-amino-acid chain: tRNA pseudouridine synthase B (304 aa).

Asp38 (nucleophile) is an active-site residue.

The protein belongs to the pseudouridine synthase TruB family. Type 1 subfamily.

The enzyme catalyses uridine(55) in tRNA = pseudouridine(55) in tRNA. Responsible for synthesis of pseudouridine from uracil-55 in the psi GC loop of transfer RNAs. This Geobacter sulfurreducens (strain ATCC 51573 / DSM 12127 / PCA) protein is tRNA pseudouridine synthase B.